The chain runs to 315 residues: Secreted frizzled-related protein 3 (315 aa).

An N-terminal signal peptide occupies residues 1–21 (MWRGLPALALAALLLLGRAPA). Positions 22 to 142 (GRAAACEPVR…LYDRGVCISP (121 aa)) constitute an FZ domain. 5 disulfide bridges follow: Cys27/Cys88, Cys35/Cys81, Cys72/Cys111, Cys100/Cys139, and Cys104/Cys128. Residue Asn41 is glycosylated (N-linked (GlcNAc...) asparagine). The 121-residue stretch at 170–290 (CKCKPIKATQ…WDQKLRHLGK (121 aa)) folds into the NTR domain. The tract at residues 284 to 315 (KLRHLGKGKGEPGQSDSALKTGKPGNARQTRS) is disordered.

It belongs to the secreted frizzled-related protein (sFRP) family.

The protein localises to the secreted. Soluble frizzled-related proteins (sFRPS) function as modulators of Wnt signaling through direct interaction with Wnts. They have a role in regulating cell growth and differentiation in specific cell types. SFRP3/FRZB appears to be involved in limb skeletogenesis. Antagonist of Wnt8 signaling. Regulates chondrocyte maturation and long bone development. The chain is Secreted frizzled-related protein 3 (FRZB) from Gallus gallus (Chicken).